Consider the following 415-residue polypeptide: Transcriptional regulator fogI (415 aa).

The zn(2)-C6 fungal-type DNA-binding region spans cysteine 12–cysteine 39. Positions aspartate 50–proline 153 are disordered. 2 stretches are compositionally biased toward low complexity: residues valine 80–threonine 102 and glutamine 123–proline 135.

It localises to the nucleus. Transcriptional regulator that postively regulates the expression of the gene cluster that mediates the biosynthesis of flavoglaucin and congeners (including aspergin, dihydroauroglaucin and auroglaucin), prenylated salicylaldehyde derivatives carrying a saturated or an unsaturated C-7 side chain. This is Transcriptional regulator fogI from Aspergillus ruber (strain CBS 135680).